Reading from the N-terminus, the 205-residue chain is Methylthioribulose-1-phosphate dehydratase (205 aa).

Zn(2+) contacts are provided by histidine 96 and histidine 98.

It belongs to the aldolase class II family. MtnB subfamily. The cofactor is Zn(2+).

The enzyme catalyses 5-(methylsulfanyl)-D-ribulose 1-phosphate = 5-methylsulfanyl-2,3-dioxopentyl phosphate + H2O. Its pathway is amino-acid biosynthesis; L-methionine biosynthesis via salvage pathway; L-methionine from S-methyl-5-thio-alpha-D-ribose 1-phosphate: step 2/6. Its function is as follows. Catalyzes the dehydration of methylthioribulose-1-phosphate (MTRu-1-P) into 2,3-diketo-5-methylthiopentyl-1-phosphate (DK-MTP-1-P). The protein is Methylthioribulose-1-phosphate dehydratase of Pseudomonas aeruginosa (strain LESB58).